A 192-amino-acid polypeptide reads, in one-letter code: Large ribosomal subunit protein uL5 (192 aa).

Belongs to the universal ribosomal protein uL5 family. In terms of assembly, part of the 50S ribosomal subunit; contacts the 5S rRNA and probably tRNA. Forms a bridge to the 30S subunit in the 70S ribosome.

Its function is as follows. This is one of the proteins that bind and probably mediate the attachment of the 5S RNA into the large ribosomal subunit, where it forms part of the central protuberance. In the 70S ribosome it contacts protein S13 of the 30S subunit (bridge B1b), connecting the 2 subunits; this bridge is implicated in subunit movement. May contact the P site tRNA; the 5S rRNA and some of its associated proteins might help stabilize positioning of ribosome-bound tRNAs. The chain is Large ribosomal subunit protein uL5 from Aeropyrum pernix (strain ATCC 700893 / DSM 11879 / JCM 9820 / NBRC 100138 / K1).